Reading from the N-terminus, the 352-residue chain is Probable tyrosine-protein kinase DDB_G0290471 (352 aa).

In terms of domain architecture, Protein kinase spans 51 to 333 (IEYVCRLGSG…ISLNQIRSFY (283 aa)). ATP contacts are provided by residues 57-65 (LGSGSLCRV) and Lys78. Asp175 acts as the Proton acceptor in catalysis.

This sequence belongs to the protein kinase superfamily. TKL Tyr protein kinase family.

It carries out the reaction L-tyrosyl-[protein] + ATP = O-phospho-L-tyrosyl-[protein] + ADP + H(+). The polypeptide is Probable tyrosine-protein kinase DDB_G0290471 (Dictyostelium discoideum (Social amoeba)).